Consider the following 187-residue polypeptide: MAMAKGLIFLGAPGSGKGTQAVGLAETLGIPHISTGDMLRQAIADGTELGNQAKGYMDKGELVPDQLILGLIEERLGHKDAKAGWILDGFPRNVNQAIFLDELLVNIGHRTHWVINLKVPDEVIVERLLARGRADDNETTIRNRLLVYTEQTAPLMAYYQEQGKLYSLDGNQPVEAIATNLEKLVKP.

14 to 19 (GSGKGT) is an ATP binding site. The interval 34 to 63 (STGDMLRQAIADGTELGNQAKGYMDKGELV) is NMP. AMP is bound by residues Thr35, Arg40, 61–63 (ELV), 89–92 (GFPR), and Gln96. Residues 130 to 136 (ARGRADD) are LID. Arg131 provides a ligand contact to ATP. Residues Arg133 and Arg144 each contribute to the AMP site. Gln172 lines the ATP pocket.

It belongs to the adenylate kinase family. As to quaternary structure, monomer.

The protein resides in the cytoplasm. It carries out the reaction AMP + ATP = 2 ADP. It functions in the pathway purine metabolism; AMP biosynthesis via salvage pathway; AMP from ADP: step 1/1. In terms of biological role, catalyzes the reversible transfer of the terminal phosphate group between ATP and AMP. Plays an important role in cellular energy homeostasis and in adenine nucleotide metabolism. This chain is Adenylate kinase 1, found in Synechocystis sp. (strain ATCC 27184 / PCC 6803 / Kazusa).